Consider the following 550-residue polypeptide: Methyl-accepting chemotaxis protein PcaY (550 aa).

Residues methionine 1 to glycine 19 lie on the Cytoplasmic side of the membrane. The chain crosses the membrane as a helical span at residues methionine 20–tryptophan 40. Over alanine 41–glutamine 198 the chain is Periplasmic. The tract at residues glycine 44–arginine 196 is ligand-binding domain. Benzoate-binding residues include arginine 71 and asparagine 75. Positions 71, 75, and 135 each coordinate salicylate. Arginine 71–serine 78 contacts 3,4-dihydroxybenzoate. L-quinate is bound by residues arginine 71–serine 78, tyrosine 135, glutamine 142, and asparagine 158. Glutamine 169 is a 3,4-dihydroxybenzoate binding site. The helical transmembrane segment at leucine 199 to isoleucine 219 threads the bilayer. Residues alanine 220 to valine 550 are Cytoplasmic-facing. The HAMP domain occupies glutamine 221–glycine 273. The region spanning cysteine 278–arginine 514 is the Methyl-accepting transducer domain.

This sequence belongs to the methyl-accepting chemotaxis (MCP) protein family. In terms of assembly, ligand free PcaY_PP-ligand-binding domain (LBD) is present in a monomer-dimer equilibrium. Only the dimeric LBD is able to bind ligands which in turn causes dimer stabilization.

It is found in the cell inner membrane. Functionally, chemotactic-signal transducers respond to changes in the concentration of attractants and repellents in the environment, transduce a signal from the outside to the inside of the cell, and facilitate sensory adaptation through the variation of the level of methylation. PcaY recognizes a wide range of compounds containing a C6-membered ring with a carboxylate group. Binds preferentially compounds that serve as carbon sources and among them those that rapidly promote growth. Tightest binding compounds are quinate, shikimate, 3-dehydroshikimate and protocatechuate, which are at the interception of the biosynthetic shikimate and catabolic quinate pathways. This is Methyl-accepting chemotaxis protein PcaY from Pseudomonas putida (strain ATCC 47054 / DSM 6125 / CFBP 8728 / NCIMB 11950 / KT2440).